A 560-amino-acid chain; its full sequence is MNNNIINLIAAIVLSLSIIFGWQYFVIKPEQKKQQQQIAVQKAANLKKQQLKALVEPATDIVVQEESQVQRIKIESESLTGSISLKGLRFDDLILKKYKQDLSKNSSDVVLFSPTNTEHSYFAEIGLVSNLSSVKLPNNDTIWSSDGEILSPEKPVNLFWVNEDGVKFLVTITVDKNYLFTIEQTIVNNSDKELPIQSYGLINRKYTAVEKAVNILHQGPIGCIDENLKEYSYDDIKDKKSEKFAASKVDWIGITDKYWLSALIPDKSSNYSSNFNYAVKQGIEKYQVDFISPVQIIKPGENFAIKSRIFAGAKKVDLLDQYEKQYDIKLFDRAIDFGWFYIITKPVFYAMNFFYGYVGNFGVSILIVTVIIKLLMFTLANKSYRSMKKIKNLQPEIDRIKNLYSDDKARLNQEIMALYKKEKVNPVAGCLPILVQIPVFFSIYKVLYVTIEMRQAQFYGWIKDLSAPDPTTIFNLFGLLPFSPPSFLMIGAWPILMAITMFLQQKMSPEPADPMQAQVMKFMPLIFLFMFSSFPVGLLIYWSWNNILSIIQQYYINKFN.

6 helical membrane passes run 5–25 (IINL…WQYF), 334–354 (AIDF…MNFF), 357–377 (YVGN…LLMF), 431–451 (LPIL…YVTI), 476–496 (LFGL…WPIL), and 522–542 (FMPL…LIYW).

The protein belongs to the OXA1/ALB3/YidC family. Type 1 subfamily. Interacts with the Sec translocase complex via SecD. Specifically interacts with transmembrane segments of nascent integral membrane proteins during membrane integration.

The protein localises to the cell inner membrane. In terms of biological role, required for the insertion and/or proper folding and/or complex formation of integral membrane proteins into the membrane. Involved in integration of membrane proteins that insert both dependently and independently of the Sec translocase complex, as well as at least some lipoproteins. Aids folding of multispanning membrane proteins. The chain is Membrane protein insertase YidC from Rickettsia akari (strain Hartford).